A 349-amino-acid polypeptide reads, in one-letter code: MQHVYDVTIIGGGPAGLYSAFYSGLRGLKTKLIESQSQLGGKVLLYPEKLIWDIGGQPPILGEKFVKQLIQQAKTFDPTILTNTKVDFIERQEHLFIVHTATGERHYSKTVLLAVGGGIINPQKLTLEGAEKYEMSNLHYTVQSYKRFVNRDILISGGGNAAIDWAVELSPLAKSVTVVYRKDTLSAHEATVKEAIDAGVLIECNTTITKLLANDDKTAIQLVRCENSKTKESYTRQIDEVIISHGYNCEASLTFDEAISIPKKDDYYFEGKATGETAQPGIFAAGDILSFEGKINLLLGTFQDAANAVNSIKTYLEPTAYRHGMVSSHNELFKEKNRSIIEKELVPSH.

FAD contacts are provided by Glu-34, Lys-42, Tyr-46, Val-86, Ile-120, Asp-287, and Ser-328.

This sequence belongs to the ferredoxin--NADP reductase type 2 family. Homodimer. The cofactor is FAD.

The catalysed reaction is 2 reduced [2Fe-2S]-[ferredoxin] + NADP(+) + H(+) = 2 oxidized [2Fe-2S]-[ferredoxin] + NADPH. The sequence is that of Ferredoxin--NADP reductase 3 from Lysinibacillus sphaericus (strain C3-41).